A 277-amino-acid polypeptide reads, in one-letter code: Proteasome subunit beta type-7 (277 aa).

The propeptide at 1–43 is removed in mature form; the sequence is MAAVSVFQAPVGGFSFDNCRRNAVLEADFAKKGFKLPKARKTG. Catalysis depends on threonine 44, which acts as the Nucleophile.

Belongs to the peptidase T1B family. As to quaternary structure, the 26S proteasome consists of a 20S proteasome core and two 19S regulatory subunits. The 20S proteasome core is a barrel-shaped complex made of 28 subunits that are arranged in four stacked rings. The two outer rings are each formed by seven alpha subunits, and the two inner rings are formed by seven beta subunits. The proteolytic activity is exerted by three beta-subunits PSMB5, PSMB6 and PSMB7.

It is found in the cytoplasm. The protein resides in the nucleus. The enzyme catalyses Cleavage of peptide bonds with very broad specificity.. In terms of biological role, component of the 20S core proteasome complex involved in the proteolytic degradation of most intracellular proteins. This complex plays numerous essential roles within the cell by associating with different regulatory particles. Associated with two 19S regulatory particles, forms the 26S proteasome and thus participates in the ATP-dependent degradation of ubiquitinated proteins. The 26S proteasome plays a key role in the maintenance of protein homeostasis by removing misfolded or damaged proteins that could impair cellular functions, and by removing proteins whose functions are no longer required. Associated with the PA200 or PA28, the 20S proteasome mediates ubiquitin-independent protein degradation. This type of proteolysis is required in several pathways including spermatogenesis (20S-PA200 complex) or generation of a subset of MHC class I-presented antigenic peptides (20S-PA28 complex). Within the 20S core complex, PSMB7 displays a trypsin-like activity. This is Proteasome subunit beta type-7 (Psmb7) from Rattus norvegicus (Rat).